The chain runs to 334 residues: Glyceraldehyde-3-phosphate dehydrogenase (334 aa).

NAD(+) contacts are provided by residues threonine 12 to isoleucine 13 and glycine 111. Serine 140–asparagine 142 serves as a coordination point for D-glyceraldehyde 3-phosphate. The active-site Nucleophile is the cysteine 141. Arginine 167 lines the NAD(+) pocket. D-glyceraldehyde 3-phosphate is bound at residue histidine 192–glycine 193. An NAD(+)-binding site is contributed by glutamine 298.

It belongs to the glyceraldehyde-3-phosphate dehydrogenase family. Homotetramer.

Its subcellular location is the cytoplasm. It catalyses the reaction D-glyceraldehyde 3-phosphate + phosphate + NADP(+) = (2R)-3-phospho-glyceroyl phosphate + NADPH + H(+). It carries out the reaction D-glyceraldehyde 3-phosphate + phosphate + NAD(+) = (2R)-3-phospho-glyceroyl phosphate + NADH + H(+). The protein operates within carbohydrate degradation; glycolysis; pyruvate from D-glyceraldehyde 3-phosphate: step 1/5. This chain is Glyceraldehyde-3-phosphate dehydrogenase, found in Thermococcus onnurineus (strain NA1).